The chain runs to 142 residues: Small ribosomal subunit protein uS9c (142 aa).

This sequence belongs to the universal ribosomal protein uS9 family.

Its subcellular location is the plastid. It is found in the chloroplast. The sequence is that of Small ribosomal subunit protein uS9c (rps9) from Stigeoclonium helveticum (Green alga).